The primary structure comprises 724 residues: WW domain-containing protein ZK1098.1 (724 aa).

2 consecutive WW domains span residues proline 78–valine 111 and glutamine 123–glycine 156. FF domains follow at residues lysine 224–glutamine 282, isoleucine 295–phenylalanine 349, arginine 353–glutamine 422, glutamine 442–aspartate 502, tyrosine 507–lysine 562, and lysine 578–glycine 632. The disordered stretch occupies residues phenylalanine 626 to aspartate 724. Positions lysine 630–glycine 639 are enriched in polar residues. The segment covering lysine 645–lysine 657 has biased composition (basic residues). Basic and acidic residues predominate over residues serine 681–glycine 692. The segment covering lysine 693–proline 703 has biased composition (basic residues).

This Caenorhabditis elegans protein is WW domain-containing protein ZK1098.1.